We begin with the raw amino-acid sequence, 122 residues long: Large ribosomal subunit protein uL14c (122 aa).

It belongs to the universal ribosomal protein uL14 family. As to quaternary structure, part of the 50S ribosomal subunit.

It is found in the plastid. The protein localises to the chloroplast. In terms of biological role, binds to 23S rRNA. This Nicotiana tomentosiformis (Tobacco) protein is Large ribosomal subunit protein uL14c.